The following is a 523-amino-acid chain: Synaptotagmin-10 (523 aa).

The Vesicular segment spans residues 1 to 55 (MSFHKEDGVNSLCQKALHIVTELCFAGQVEWEKCSGIFPRDRGSQGGSSTDISVS). Residues 13–35 (CQKALHIVTELCFAGQVEWEKCS) form a cysteine motif region. A helical transmembrane segment spans residues 56–76 (LLAVVVSFCGLALLVVSLFVF). Residues 77–523 (WKLCWPCWKS…CPSPKPPSTP (447 aa)) are Cytoplasmic-facing. T136 carries the phosphothreonine modification. C2 domains lie at 231–352 (ICGK…TVWK) and 363–496 (DLGE…THWH). Ca(2+)-binding residues include D262, D268, D320, F321, D322, S325, D328, D394, D400, D454, and D456.

It belongs to the synaptotagmin family. As to quaternary structure, homodimer; disulfide-linked via the cysteine motif. Can also form heterodimers with SYT3, SYT6, SYT7 and SYT9. It depends on Ca(2+) as a cofactor.

It localises to the cytoplasmic vesicle. It is found in the secretory vesicle membrane. Ca(2+) sensor specifically required for the Ca(2+)-dependent exocytosis of secretory vesicles containing IGF1 in neurons of the olfactory bulb. Exocytosis of IGF1 is required for sensory perception of smell. Not involved in Ca(2+)-dependent synaptic vesicle exocytosis. Acts through Ca(2+) and phospholipid binding to the C2 domain: Ca(2+) induces binding of the C2-domains to phospholipid membranes and to assembled SNARE-complexes; both actions contribute to triggering exocytosis. This is Synaptotagmin-10 (SYT10) from Pongo abelii (Sumatran orangutan).